An 89-amino-acid chain; its full sequence is Small ribosomal subunit protein uS15 (89 aa).

The tract at residues 1–24 is disordered; it reads MSLNAEQKSEIVEQFRRSPSDTGS. A compositionally biased stretch (basic and acidic residues) spans 7 to 19; sequence QKSEIVEQFRRSP.

Belongs to the universal ribosomal protein uS15 family. As to quaternary structure, part of the 30S ribosomal subunit. Forms a bridge to the 50S subunit in the 70S ribosome, contacting the 23S rRNA.

In terms of biological role, one of the primary rRNA binding proteins, it binds directly to 16S rRNA where it helps nucleate assembly of the platform of the 30S subunit by binding and bridging several RNA helices of the 16S rRNA. Functionally, forms an intersubunit bridge (bridge B4) with the 23S rRNA of the 50S subunit in the ribosome. This chain is Small ribosomal subunit protein uS15, found in Halorhodospira halophila (strain DSM 244 / SL1) (Ectothiorhodospira halophila (strain DSM 244 / SL1)).